The sequence spans 432 residues: Beta-fructosidase (432 aa).

Residues 14-17, Q33, W41, 74-75, Y92, 137-138, 188-190, T208, and W260 each bind substrate; these read WMND, FS, RD, and EIE. Residue D17 is part of the active site.

This sequence belongs to the glycosyl hydrolase 32 family.

The enzyme catalyses Hydrolysis of terminal non-reducing beta-D-fructofuranoside residues in beta-D-fructofuranosides.. Its function is as follows. Hydrolysis of sucrose, raffinose, inulin and levan. Specific for the fructose moiety and the beta-anomeric configuration of the glycosidic linkages of its substrates. The enzyme released fructose from sucrose and raffinose, and the fructose polymer inulin is hydrolyzed quantitatively in an exo-type fashion. In Thermotoga maritima (strain ATCC 43589 / DSM 3109 / JCM 10099 / NBRC 100826 / MSB8), this protein is Beta-fructosidase (bfrA).